Reading from the N-terminus, the 180-residue chain is CD-NTase/cGAS isopeptidase (180 aa).

The region spanning 33–165 (IVISSSTIEQ…AGSYSLSASV (133 aa)) is the MPN domain. E54 (proton donor/acceptor) is an active-site residue. Positions 115, 117, and 128 each coordinate Zn(2+).

Belongs to the peptidase M67B family. Cap3 isopeptidase subfamily.

Metalloprotease priming reversal component of a CBASS antivirus system. CBASS (cyclic oligonucleotide-based antiphage signaling system) provides immunity against bacteriophages. The CD-NTase protein (CdnD) synthesizes cyclic nucleotides in response to infection; these serve as specific second messenger signals. The signals activate a diverse range of effectors, leading to bacterial cell death and thus abortive phage infection. A type II-C(AAG) CBASS system. Its function is as follows. Reverses the primed state of DncV, the CD-NTase. Cleaves a CdnD-GFP (green fluorescent protein) fusion protein precisely at the C-terminus of CdnD. Overexpression decreases the efficacy of CBASS protection against phage T2. Antagonism of phage defense upon overexpression is CBASS-system specific, Cap3 from this bacteria only antagonizes its cognate CBASS system and not that of C.freundii, E.coli or V.cholerae. In terms of biological role, protects E.coli against phage T2 infection. When the cdnD-cap2-cap3-cap4 operon is introduced in E.coli there is a more than 10(3) decrease in the efficiency of T2 plaque formation. The operon does not protect against phage T5 and only about 10-fold against T7. This Enterobacter hormaechei subsp. hoffmannii (strain UCI 50) protein is CD-NTase/cGAS isopeptidase.